Here is a 204-residue protein sequence, read N- to C-terminus: MSKVVVLNDKLEKAGELDLPSKYAEVNPHNLYLYVKSYLASLRANTAHTKGRSDVSGGGKKPWRQKGRGGARAGSTRTNVWVGGAVAFGPTNERNYFQKVNKKQKRLAFERALADKAAKGALFTADSLAIESGKTKDANAVIKKLGVKDVLIVKDLLDEKTLLAYRNLANCYVVDVAEVNAYLVSVFNAVIMEKSALESITKEG.

A disordered region spans residues 49–75; sequence TKGRSDVSGGGKKPWRQKGRGGARAGS.

This sequence belongs to the universal ribosomal protein uL4 family. In terms of assembly, part of the 50S ribosomal subunit.

Functionally, one of the primary rRNA binding proteins, this protein initially binds near the 5'-end of the 23S rRNA. It is important during the early stages of 50S assembly. It makes multiple contacts with different domains of the 23S rRNA in the assembled 50S subunit and ribosome. Its function is as follows. Forms part of the polypeptide exit tunnel. The chain is Large ribosomal subunit protein uL4 from Campylobacter jejuni subsp. doylei (strain ATCC BAA-1458 / RM4099 / 269.97).